The sequence spans 201 residues: 3-isopropylmalate dehydratase small subunit (201 aa).

This sequence belongs to the LeuD family. LeuD type 1 subfamily. In terms of assembly, heterodimer of LeuC and LeuD.

It catalyses the reaction (2R,3S)-3-isopropylmalate = (2S)-2-isopropylmalate. Its pathway is amino-acid biosynthesis; L-leucine biosynthesis; L-leucine from 3-methyl-2-oxobutanoate: step 2/4. In terms of biological role, catalyzes the isomerization between 2-isopropylmalate and 3-isopropylmalate, via the formation of 2-isopropylmaleate. This Shewanella piezotolerans (strain WP3 / JCM 13877) protein is 3-isopropylmalate dehydratase small subunit.